Here is a 183-residue protein sequence, read N- to C-terminus: Gamma-crystallin N-B (183 aa).

Beta/gamma crystallin 'Greek key' domains follow at residues 6–46 (GKIC…RVES), 47–89 (GAWI…RPIR), 95–136 (YRME…RVFG), and 138–180 (GAWV…RRIV).

It belongs to the beta/gamma-crystallin family. Monomer.

Functionally, crystallins are the dominant structural components of the vertebrate eye lens. This Danio rerio (Zebrafish) protein is Gamma-crystallin N-B (crygnb).